We begin with the raw amino-acid sequence, 575 residues long: Intermediate filament protein ifd-1 (575 aa).

The head stretch occupies residues 1–56; sequence MSKLNPRVAHNPVLSRIIESGRTNLPSGITSAGSLSAYAQAAAVTIRDNRDREKRE. The 354-residue stretch at 53–406 folds into the IF rod domain; it reads EKREIADLNN…KLMEQAENLR (354 aa). The segment at 57–88 is coil 1A; it reads IADLNNRLARYVEKVRFLEAQNRVLENDIGLF. The segment at 89–102 is linker 1; that stretch reads RQAAHIHTGKVRDY. The interval 103 to 240 is coil 1B; the sequence is YDAEKTSLAT…STHEIAIREE (138 aa). A linker 12 region spans residues 241–258; the sequence is INKARRDSTDKNREFFHR. The interval 259-408 is coil 2; the sequence is ELHMSMKEIR…MEQAENLRTS (150 aa). The tail stretch occupies residues 409 to 572; sequence YQSDFVIDTP…DEVGWYAHVS (164 aa). Residues 459 to 575 enclose the LTD domain; sequence NTQQFRSYGK…GWYAHVSYSH (117 aa).

It belongs to the intermediate filament family.

It localises to the cytoplasm. In terms of biological role, cytoplasmic intermediate filaments provide mechanical strength to cells. Not essential protein. The chain is Intermediate filament protein ifd-1 from Caenorhabditis elegans.